We begin with the raw amino-acid sequence, 364 residues long: Transposase for insertion sequence element IS1111A (364 aa).

The protein belongs to the transposase IS1111A/IS1328/IS1533 family.

Its function is as follows. Required for the transposition of the insertion element. The polypeptide is Transposase for insertion sequence element IS1111A (Coxiella burnetii (strain RSA 493 / Nine Mile phase I)).